Reading from the N-terminus, the 557-residue chain is MPDNRRSQAITKGAKRAPNRAMLRAVGFGDGDFDKPIVGIANGFSTITPCNMGLDTLAKCAEHALKNAGAMPQMFGTITVSDGISMGTEGMKYSLVSREVIADSIETCVQAESMDGVIAIGGCDKNMPGALIALARLNVPSIFVYGGTIKPGHYQGRDLTIVSAFEAVGQHSAHKIDDQELLEVERHACPGAGSCGGMYTANTMSSAIEAMGMSLPHSSTMAAEDEEKRISATRSAEVLVEAIKKQILPRSLITRKSLENAVTVVMAVGGSTNAVLHLLAIAHAAEVDFHIDDFEAIRARVPVLCDLKPSGRYVATDLHRAGGIPQVMKMLLVHGLLHGDCLTISGQTIAEVLKDIPEQPRADQNVIRTWDNPVYEQGHLAILKGNLSPEGAVAKISGVKNPNITGPARVFESEETCMTAILDRKIKPGDVVVIRYEGPRGGPGMREMLSPTSALIGEGLGDSVGLITDGRFSGGTYGMVVGHVAPEAYAGGVIALVEEGDSITIDAHRRLLQLNVSETELERRRAAWQPPAPRYTRGVLAKYAKLVSTASRGAVTD.

Cys50 is a binding site for [2Fe-2S] cluster. Mg(2+) is bound at residue Asp82. Position 123 (Cys123) interacts with [2Fe-2S] cluster. The Mg(2+) site is built by Asp124 and Lys125. Position 125 is an N6-carboxylysine (Lys125). Residue Cys195 participates in [2Fe-2S] cluster binding. Glu447 is a Mg(2+) binding site. Ser473 acts as the Proton acceptor in catalysis.

This sequence belongs to the IlvD/Edd family. In terms of assembly, homodimer. [2Fe-2S] cluster serves as cofactor. The cofactor is Mg(2+).

It catalyses the reaction (2R)-2,3-dihydroxy-3-methylbutanoate = 3-methyl-2-oxobutanoate + H2O. It carries out the reaction (2R,3R)-2,3-dihydroxy-3-methylpentanoate = (S)-3-methyl-2-oxopentanoate + H2O. The protein operates within amino-acid biosynthesis; L-isoleucine biosynthesis; L-isoleucine from 2-oxobutanoate: step 3/4. Its pathway is amino-acid biosynthesis; L-valine biosynthesis; L-valine from pyruvate: step 3/4. Functionally, functions in the biosynthesis of branched-chain amino acids. Catalyzes the dehydration of (2R,3R)-2,3-dihydroxy-3-methylpentanoate (2,3-dihydroxy-3-methylvalerate) into 2-oxo-3-methylpentanoate (2-oxo-3-methylvalerate) and of (2R)-2,3-dihydroxy-3-methylbutanoate (2,3-dihydroxyisovalerate) into 2-oxo-3-methylbutanoate (2-oxoisovalerate), the penultimate precursor to L-isoleucine and L-valine, respectively. The chain is Dihydroxy-acid dehydratase from Nitrosomonas eutropha (strain DSM 101675 / C91 / Nm57).